The following is a 120-amino-acid chain: UPF0102 protein FRAAL5785 (120 aa).

This sequence belongs to the UPF0102 family.

In Frankia alni (strain DSM 45986 / CECT 9034 / ACN14a), this protein is UPF0102 protein FRAAL5785.